The sequence spans 281 residues: Undecaprenyl-diphosphatase (281 aa).

Transmembrane regions (helical) follow at residues 2–22, 46–66, 93–113, 115–135, 152–172, 190–210, 228–248, and 259–279; these read FDLI…FLPV, AFSS…VIQL, VIVG…FMDA, LMNF…FIVI, ITFK…VPGT, FVAA…VTFL, IVML…IKFM, and VFGY…ILGI.

This sequence belongs to the UppP family.

It is found in the cell membrane. It carries out the reaction di-trans,octa-cis-undecaprenyl diphosphate + H2O = di-trans,octa-cis-undecaprenyl phosphate + phosphate + H(+). Functionally, catalyzes the dephosphorylation of undecaprenyl diphosphate (UPP). Confers resistance to bacitracin. The chain is Undecaprenyl-diphosphatase from Leuconostoc mesenteroides subsp. mesenteroides (strain ATCC 8293 / DSM 20343 / BCRC 11652 / CCM 1803 / JCM 6124 / NCDO 523 / NBRC 100496 / NCIMB 8023 / NCTC 12954 / NRRL B-1118 / 37Y).